A 263-amino-acid chain; its full sequence is Mediator of RNA polymerase II transcription subunit 6 (263 aa).

The interval 159–205 is disordered; that stretch reads NSIHGSSSKPSQSSAVSKPSSTNTGTNATTTPITLTTPSGATVPSTV. Over residues 164–200 the composition is skewed to low complexity; that stretch reads SSSKPSQSSAVSKPSSTNTGTNATTTPITLTTPSGAT.

This sequence belongs to the Mediator complex subunit 6 family. In terms of assembly, component of the Mediator complex.

It localises to the nucleus. Its function is as follows. Component of the Mediator complex, a coactivator involved in the regulated transcription of nearly all RNA polymerase II-dependent genes. Mediator functions as a bridge to convey information from gene-specific regulatory proteins to the basal RNA polymerase II transcription machinery. Mediator is recruited to promoters by direct interactions with regulatory proteins and serves as a scaffold for the assembly of a functional preinitiation complex with RNA polymerase II and the general transcription factors. This is Mediator of RNA polymerase II transcription subunit 6 (MED6) from Candida albicans (strain SC5314 / ATCC MYA-2876) (Yeast).